Consider the following 376-residue polypeptide: Lipid-A-disaccharide synthase (376 aa).

The protein belongs to the LpxB family.

It catalyses the reaction a lipid X + a UDP-2-N,3-O-bis[(3R)-3-hydroxyacyl]-alpha-D-glucosamine = a lipid A disaccharide + UDP + H(+). The protein operates within bacterial outer membrane biogenesis; LPS lipid A biosynthesis. In terms of biological role, condensation of UDP-2,3-diacylglucosamine and 2,3-diacylglucosamine-1-phosphate to form lipid A disaccharide, a precursor of lipid A, a phosphorylated glycolipid that anchors the lipopolysaccharide to the outer membrane of the cell. The chain is Lipid-A-disaccharide synthase from Coxiella burnetii (strain RSA 331 / Henzerling II).